We begin with the raw amino-acid sequence, 89 residues long: Small ribosomal subunit protein uS17 (89 aa).

This sequence belongs to the universal ribosomal protein uS17 family. As to quaternary structure, part of the 30S ribosomal subunit.

Its function is as follows. One of the primary rRNA binding proteins, it binds specifically to the 5'-end of 16S ribosomal RNA. The polypeptide is Small ribosomal subunit protein uS17 (Bdellovibrio bacteriovorus (strain ATCC 15356 / DSM 50701 / NCIMB 9529 / HD100)).